A 183-amino-acid chain; its full sequence is tRNA-splicing endonuclease (183 aa).

Active-site residues include Y120, H128, and K159.

Belongs to the tRNA-intron endonuclease family. Archaeal short subfamily. Homotetramer; although the tetramer contains four active sites, only two participate in the cleavage. Therefore, it should be considered as a dimer of dimers.

It catalyses the reaction pretRNA = a 3'-half-tRNA molecule with a 5'-OH end + a 5'-half-tRNA molecule with a 2',3'-cyclic phosphate end + an intron with a 2',3'-cyclic phosphate and a 5'-hydroxyl terminus.. Endonuclease that removes tRNA introns. Cleaves pre-tRNA at the 5'- and 3'-splice sites to release the intron. The products are an intron and two tRNA half-molecules bearing 2',3' cyclic phosphate and 5'-OH termini. Recognizes a pseudosymmetric substrate in which 2 bulged loops of 3 bases are separated by a stem of 4 bp. The polypeptide is tRNA-splicing endonuclease (Pyrobaculum islandicum (strain DSM 4184 / JCM 9189 / GEO3)).